The primary structure comprises 310 residues: MSLYPASPYLASLLLFILALHGALSLRLCSFNVRSFGESKKENHNAMDIIVKIIKRCDLILLMEIKDSNNNICPMLMEKLNGNSRRSTTYNYVISSRLGRNTYKEQYAFLYKEKLVSVKAKYLYHDYQDGDTDVFSREPFVVWFQAPFTAAKDFVIVPLHTTPETSVKEIDELADVYTDVRRRWKAENFIFMGDFNAGCSYVPKKAWKNIRLRTDPNFVWLIGDQEDTTVKKSTSCAYDRIVLRGQEIVNSVVPRSSGVFDFQKAYELSEEEALDVSDHFPVEFKLQSSRAFTNSRKSVSLKKKKKGSRS.

The signal sequence occupies residues 1–25 (MSLYPASPYLASLLLFILALHGALS). The short motif at 40 to 56 (KKENHNAMDIIVKIIKR) is the Bipartite nuclear localization signal element. Catalysis depends on residues E105 and H160. An intrachain disulfide couples C199 to C236. The segment at 289–310 (SRAFTNSRKSVSLKKKKKGSRS) is not required for free DNA-nuclease activity but required for activity towards liposome-coated DNA. The Nuclear localization signal motif lies at 301 to 307 (LKKKKKG).

It belongs to the DNase I family. In terms of assembly, monomer. Ca(2+) is required as a cofactor. The cofactor is Mg(2+). Seems to be synthesized as an inactive precursor protein and converted into an active mature enzyme by removal of the N-terminal precursor peptide during apoptosis. Post-translationally, poly-ADP-ribosylated by PARP1. ADP-ribosylation negatively regulates enzymatic activity during apoptosis. In terms of tissue distribution, detected at high levels in spleen, lymph nodes, thymus and liver. Observed also in kidney and testis, but not in brain or heart.

The protein localises to the nucleus. It is found in the secreted. Inhibited by zinc. Has DNA hydrolytic activity. Is capable of both single- and double-stranded DNA cleavage, producing DNA fragments with 3'-OH ends. Can cleave chromatin to nucleosomal units and cleaves nucleosomal and liposome-coated DNA. Acts in internucleosomal DNA fragmentation (INDF) during apoptosis and necrosis. The role in apoptosis includes myogenic and neuronal differentiation, and BCR-mediated clonal deletion of self-reactive B cells. Is active on chromatin in apoptotic cell-derived membrane-coated microparticles and thus suppresses anti-DNA autoimmunity. Together with DNASE1, plays a key role in degrading neutrophil extracellular traps (NETs). NETs are mainly composed of DNA fibers and are released by neutrophils to bind pathogens during inflammation. Degradation of intravascular NETs by DNASE1 and DNASE1L3 is required to prevent formation of clots that obstruct blood vessels and cause organ damage following inflammation. In Rattus norvegicus (Rat), this protein is Deoxyribonuclease gamma (Dnase1l3).